The chain runs to 199 residues: Large ribosomal subunit protein uL4 (199 aa).

Belongs to the universal ribosomal protein uL4 family. In terms of assembly, part of the 50S ribosomal subunit.

Functionally, one of the primary rRNA binding proteins, this protein initially binds near the 5'-end of the 23S rRNA. It is important during the early stages of 50S assembly. It makes multiple contacts with different domains of the 23S rRNA in the assembled 50S subunit and ribosome. In terms of biological role, forms part of the polypeptide exit tunnel. In Aquifex pyrophilus, this protein is Large ribosomal subunit protein uL4.